Reading from the N-terminus, the 156-residue chain is ATP synthase subunit b (156 aa).

A helical transmembrane segment spans residues 3 to 23 (INFTLLAQALAFAGLIWIIAT).

The protein belongs to the ATPase B chain family. In terms of assembly, F-type ATPases have 2 components, F(1) - the catalytic core - and F(0) - the membrane proton channel. F(1) has five subunits: alpha(3), beta(3), gamma(1), delta(1), epsilon(1). F(0) has three main subunits: a(1), b(2) and c(10-14). The alpha and beta chains form an alternating ring which encloses part of the gamma chain. F(1) is attached to F(0) by a central stalk formed by the gamma and epsilon chains, while a peripheral stalk is formed by the delta and b chains.

It is found in the cell inner membrane. Functionally, f(1)F(0) ATP synthase produces ATP from ADP in the presence of a proton or sodium gradient. F-type ATPases consist of two structural domains, F(1) containing the extramembraneous catalytic core and F(0) containing the membrane proton channel, linked together by a central stalk and a peripheral stalk. During catalysis, ATP synthesis in the catalytic domain of F(1) is coupled via a rotary mechanism of the central stalk subunits to proton translocation. Its function is as follows. Component of the F(0) channel, it forms part of the peripheral stalk, linking F(1) to F(0). The polypeptide is ATP synthase subunit b (Stenotrophomonas maltophilia (strain R551-3)).